Reading from the N-terminus, the 196-residue chain is Small heat shock protein C3 (196 aa).

A sHSP domain is found at 88–196 (SAYSSSAIRT…EKDAKEIPIQ (109 aa)).

The protein belongs to the small heat shock protein (HSP20) family.

This chain is Small heat shock protein C3 (hspc3-1), found in Rickettsia felis (strain ATCC VR-1525 / URRWXCal2) (Rickettsia azadi).